The sequence spans 272 residues: Imidazole glycerol phosphate synthase subunit HisF (272 aa).

Residues aspartate 11 and aspartate 130 contribute to the active site.

Belongs to the HisA/HisF family. Heterodimer of HisH and HisF.

It is found in the cytoplasm. The catalysed reaction is 5-[(5-phospho-1-deoxy-D-ribulos-1-ylimino)methylamino]-1-(5-phospho-beta-D-ribosyl)imidazole-4-carboxamide + L-glutamine = D-erythro-1-(imidazol-4-yl)glycerol 3-phosphate + 5-amino-1-(5-phospho-beta-D-ribosyl)imidazole-4-carboxamide + L-glutamate + H(+). The protein operates within amino-acid biosynthesis; L-histidine biosynthesis; L-histidine from 5-phospho-alpha-D-ribose 1-diphosphate: step 5/9. Its function is as follows. IGPS catalyzes the conversion of PRFAR and glutamine to IGP, AICAR and glutamate. The HisF subunit catalyzes the cyclization activity that produces IGP and AICAR from PRFAR using the ammonia provided by the HisH subunit. This is Imidazole glycerol phosphate synthase subunit HisF from Methanococcus maripaludis (strain C7 / ATCC BAA-1331).